Here is a 459-residue protein sequence, read N- to C-terminus: DNA primase large subunit (459 aa).

4 residues coordinate [4Fe-4S] cluster: Cys-291, Cys-369, Cys-386, and Cys-428.

The protein belongs to the eukaryotic-type primase large subunit family. As to quaternary structure, heterodimer of a catalytic subunit spp1/pri1 and a regulatory subunit spp2/pri2, also known as the DNA primase complex. Component of the alpha DNA polymerase complex (also known as the alpha DNA polymerase-primase complex) consisting of four subunits: the catalytic subunit pol1, the accessory subunit spb70/pol12, and the primase complex subunits spp1/pri1 and spp2/pri2 respectively. Interacts with orc2; preferentially associates with the unphosphorylated orc2 in G1 pre-Start prior to orc2 being phosphorylated by cdc2, the interaction is mediated by spb70 and might enable the association of the whole alpha DNA polymerase complex to orc2/spb70 complex on chromatin. [4Fe-4S] cluster serves as cofactor.

The protein localises to the nucleus. Its subcellular location is the chromosome. Its function is as follows. Regulatory subunit of the DNA primase complex and component of the DNA polymerase alpha complex (also known as the alpha DNA polymerase-primase complex - primosome/replisome) which play an essential role in the initiation of DNA synthesis. During the S phase of the cell cycle, the DNA polymerase alpha complex (composed of a catalytic subunit pol1, an accessory subunit spb70/pol12 and two primase subunits, the catalytic subunit spp1/pri1 and the regulatory subunit spp2/pri2) is recruited to DNA at the replicative forks. The primase subunit of the polymerase alpha complex initiates DNA synthesis by oligomerising short RNA primers on both leading and lagging strands. This is DNA primase large subunit from Schizosaccharomyces pombe (strain 972 / ATCC 24843) (Fission yeast).